The chain runs to 309 residues: MTLLTDATPLVKEPHPLPLVPRPWFLPSLFAAFNVVLLVFFSGLFFAFPCRWLAQNGEWAFPVITGSLFVLTFFSLVSLNFSDPGILHQGSAEQGPLTVHVVWVNHGAFRLQWCPKCCFHRPPRTYHCPWCNICVEDFDHHCKWVNNCIGHRNFRFFMLLVLSLCLYSGAMLVTCLIFLVRTTHLPFSTDKAIAIVVAVSAAGLLVPLSLLLLIQALSVSSADRTYKGKCRHLQGYNPFDQGCASNWYLTICAPLGPKYMAEAVQLQRVVGPDWTSMPNLHPPMSPSALNPPAPTSGSLQSREGTPGAW.

Transmembrane regions (helical) follow at residues L29–P49 and W59–L79. The DHHC domain occupies Q112–L162. Catalysis depends on C142, which acts as the S-palmitoyl cysteine intermediate. 2 helical membrane passes run L160–V180 and I193–L213. A compositionally biased stretch (pro residues) spans L280 to P294. The tract at residues L280–W309 is disordered.

The protein belongs to the DHHC palmitoyltransferase family.

It is found in the golgi apparatus membrane. The protein localises to the cytoplasm. It localises to the perinuclear region. It catalyses the reaction L-cysteinyl-[protein] + hexadecanoyl-CoA = S-hexadecanoyl-L-cysteinyl-[protein] + CoA. Its function is as follows. Palmitoyltransferase that mediates palmitoylation oproteins, such as RRAS and SQSTM1. Catalyzes palmitoylation of RRAS, leading to increased cell viability. Acts as a positive regulator of autophagy by mediating palmitoylation of SQSTM1, promoting affinity between SQSTM1 and ATG8 proteins and recruitment of ubiquitinated cargo proteins to autophagosomes. In terms of biological role, (Microbial infection) Promotes Chikungunya virus (CHIKV) replication by mediating viral nsp1 palmitoylation. This Homo sapiens (Human) protein is Palmitoyltransferase ZDHHC19.